A 465-amino-acid chain; its full sequence is Argininosuccinate lyase (465 aa).

This sequence belongs to the lyase 1 family. Argininosuccinate lyase subfamily.

It is found in the cytoplasm. The catalysed reaction is 2-(N(omega)-L-arginino)succinate = fumarate + L-arginine. It participates in amino-acid biosynthesis; L-arginine biosynthesis; L-arginine from L-ornithine and carbamoyl phosphate: step 3/3. In Deinococcus deserti (strain DSM 17065 / CIP 109153 / LMG 22923 / VCD115), this protein is Argininosuccinate lyase.